A 193-amino-acid chain; its full sequence is Biphenyl dioxygenase subunit beta (193 aa).

This sequence belongs to the bacterial ring-hydroxylating dioxygenase beta subunit family. Heterohexamer consisting of 3 BphA1 subunits and 3 BphA2 subunits. A ferredoxin (BphA3) and a ferredoxin reductase (BphA4) must be present to obtain activity.

The catalysed reaction is biphenyl + NADH + O2 + H(+) = (2R,3S)-3-phenylcyclohexa-3,5-diene-1,2-diol + NAD(+). It functions in the pathway xenobiotic degradation; biphenyl degradation; 2-hydroxy-2,4-pentadienoate and benzoate from biphenyl: step 1/4. The beta subunit may be responsible for the substrate specificity of the enzyme. The protein is Biphenyl dioxygenase subunit beta (bphA2) of Pseudomonas sp. (strain KKS102).